Here is a 458-residue protein sequence, read N- to C-terminus: MLLLLPEITLTLIALLGQFFAVIIPNKNRIISNIIILLCILSIFLTFKYSSYEGVWYSFATGINIGISKSIVLLFTIISMIIYRDYSILIAEELKFEFITLILLSVVGIFVAISSRNFLLLFCGMELTALTSYALAGFKLNDIKSSEGALKYFILGSLVSCLSLFGISFIYGFGGSLQFEDILYKLNNNSGMNLGLIIGIVLFLSSIFFKLSSVPLHFWVPDVYEGSPISSVTYFTAASKIGMVIVLLNISKLIIGNYYPINYNLIKIIAILSMLFGAFGAIRQTSLKRLMAYSTILNIGYVLIGVLLHNQEGYKAALLYILIYAVGSIGFFTCLIMLLGKDADKASFKTIQGIAENHKTIAAIISIVMFSMIGIPPLTGFFGKYYLFYQAINQEEFILAYCGIFTSVVAAFYYLKVVKAMYFSKKIEIIKLPMLYGLLLINYLVVGFLLLGSFIISF.

A run of 14 helical transmembrane segments spans residues 4-24 (LLPE…AVII), 30-50 (IISN…FKYS), 62-82 (GINI…SMII), 94-114 (LKFE…VAIS), 118-138 (FLLL…LAGF), 153-173 (FILG…IYGF), 194-214 (LGLI…LSSV), 235-255 (FTAA…KLII), 261-281 (INYN…AFGA), 290-310 (LMAY…LLHN), 318-338 (LLYI…LIML), 361-381 (IAAI…LTGF), 397-417 (FILA…YLKV), and 438-458 (LLLI…IISF).

This sequence belongs to the complex I subunit 2 family. NDH-1 is composed of 14 different subunits. Subunits NuoA, H, J, K, L, M, N constitute the membrane sector of the complex.

The protein localises to the cell inner membrane. It catalyses the reaction a quinone + NADH + 5 H(+)(in) = a quinol + NAD(+) + 4 H(+)(out). Functionally, NDH-1 shuttles electrons from NADH, via FMN and iron-sulfur (Fe-S) centers, to quinones in the respiratory chain. The immediate electron acceptor for the enzyme in this species is believed to be ubiquinone. Couples the redox reaction to proton translocation (for every two electrons transferred, four hydrogen ions are translocated across the cytoplasmic membrane), and thus conserves the redox energy in a proton gradient. The chain is NADH-quinone oxidoreductase subunit N from Rickettsia felis (strain ATCC VR-1525 / URRWXCal2) (Rickettsia azadi).